A 292-amino-acid polypeptide reads, in one-letter code: Acetylglutamate kinase (292 aa).

Substrate contacts are provided by residues 64 to 65 (GG), Arg86, and Asn190.

The protein belongs to the acetylglutamate kinase family. ArgB subfamily.

The protein localises to the cytoplasm. The catalysed reaction is N-acetyl-L-glutamate + ATP = N-acetyl-L-glutamyl 5-phosphate + ADP. It participates in amino-acid biosynthesis; L-arginine biosynthesis; N(2)-acetyl-L-ornithine from L-glutamate: step 2/4. Its function is as follows. Catalyzes the ATP-dependent phosphorylation of N-acetyl-L-glutamate. This Geobacter sulfurreducens (strain ATCC 51573 / DSM 12127 / PCA) protein is Acetylglutamate kinase.